A 402-amino-acid chain; its full sequence is Protein arginine methyltransferase NDUFAF7 homolog, mitochondrial (402 aa).

Belongs to the NDUFAF7 family.

The protein localises to the mitochondrion. The catalysed reaction is L-arginyl-[protein] + 2 S-adenosyl-L-methionine = N(omega),N(omega)'-dimethyl-L-arginyl-[protein] + 2 S-adenosyl-L-homocysteine + 2 H(+). Its function is as follows. Arginine methyltransferase involved in the assembly or stability of mitochondrial NADH:ubiquinone oxidoreductase complex (complex I). The chain is Protein arginine methyltransferase NDUFAF7 homolog, mitochondrial from Saccharomyces cerevisiae (strain ATCC 204508 / S288c) (Baker's yeast).